The primary structure comprises 544 residues: Chaperonin GroEL (544 aa).

Residues Thr-30–Pro-33, Lys-51, Asp-87–Thr-91, Gly-415, and Asp-495 contribute to the ATP site.

This sequence belongs to the chaperonin (HSP60) family. As to quaternary structure, forms a cylinder of 14 subunits composed of two heptameric rings stacked back-to-back. Interacts with the co-chaperonin GroES.

The protein localises to the cytoplasm. The catalysed reaction is ATP + H2O + a folded polypeptide = ADP + phosphate + an unfolded polypeptide.. Its function is as follows. Together with its co-chaperonin GroES, plays an essential role in assisting protein folding. The GroEL-GroES system forms a nano-cage that allows encapsulation of the non-native substrate proteins and provides a physical environment optimized to promote and accelerate protein folding. The chain is Chaperonin GroEL from Bartonella bacilliformis.